The following is a 388-amino-acid chain: Putative nickel insertion protein (388 aa).

Belongs to the LarC family.

The polypeptide is Putative nickel insertion protein (Syntrophobacter fumaroxidans (strain DSM 10017 / MPOB)).